We begin with the raw amino-acid sequence, 193 residues long: dCTP deaminase (193 aa).

DCTP is bound by residues 110–115 (RSSLAR), aspartate 128, 136–138 (VLE), tyrosine 171, lysine 178, and glutamine 182. Residue glutamate 138 is the Proton donor/acceptor of the active site. Residues 169–193 (RPYNRRQDAKYRDQQGAVASRIDKD) are disordered.

It belongs to the dCTP deaminase family. As to quaternary structure, homotrimer.

It catalyses the reaction dCTP + H2O + H(+) = dUTP + NH4(+). It functions in the pathway pyrimidine metabolism; dUMP biosynthesis; dUMP from dCTP (dUTP route): step 1/2. In terms of biological role, catalyzes the deamination of dCTP to dUTP. This chain is dCTP deaminase, found in Citrobacter koseri (strain ATCC BAA-895 / CDC 4225-83 / SGSC4696).